The following is a 450-amino-acid chain: Probable ECA polymerase (450 aa).

The next 11 membrane-spanning stretches (helical) occupy residues Phe6 to Phe26, Val37 to Leu57, Val63 to Ala83, Val118 to Leu138, Gly155 to Leu175, Ala181 to Gly201, Ile207 to Trp227, Met228 to Tyr248, Leu341 to Ile361, Tyr378 to Ala398, and Val410 to Phe430.

Belongs to the WzyE family. In terms of assembly, probably part of a complex composed of WzxE, WzyE and WzzE.

The protein resides in the cell inner membrane. The protein operates within bacterial outer membrane biogenesis; enterobacterial common antigen biosynthesis. Its function is as follows. Probably involved in the polymerization of enterobacterial common antigen (ECA) trisaccharide repeat units. This is Probable ECA polymerase from Escherichia fergusonii (strain ATCC 35469 / DSM 13698 / CCUG 18766 / IAM 14443 / JCM 21226 / LMG 7866 / NBRC 102419 / NCTC 12128 / CDC 0568-73).